Consider the following 137-residue polypeptide: MLSPKKTRFRRQHRGRMKGLSSRGNQICFGKYGLQALEPAWITSRQIEAGRRAMTRNARRGGKIWVRIFPDKPVTIRPAETRMGSGKGSPEFWVSVVKPGRILYEMDGVTKNVAKRAIGIAASKMPIRTQFIFSEIK.

Over residues 1 to 17 the composition is skewed to basic residues; the sequence is MLSPKKTRFRRQHRGRM. The segment at 1 to 21 is disordered; that stretch reads MLSPKKTRFRRQHRGRMKGLS.

It belongs to the universal ribosomal protein uL16 family. In terms of assembly, part of the 50S ribosomal subunit.

Its subcellular location is the plastid. In Cuscuta obtusiflora (Peruvian dodder), this protein is Large ribosomal subunit protein uL16c.